A 329-amino-acid chain; its full sequence is 4-hydroxythreonine-4-phosphate dehydrogenase (329 aa).

Substrate contacts are provided by H136 and T137. Positions 166, 211, and 266 each coordinate a divalent metal cation. Positions 274, 283, and 292 each coordinate substrate.

The protein belongs to the PdxA family. As to quaternary structure, homodimer. Requires Zn(2+) as cofactor. The cofactor is Mg(2+). Co(2+) serves as cofactor.

The protein resides in the cytoplasm. The enzyme catalyses 4-(phosphooxy)-L-threonine + NAD(+) = 3-amino-2-oxopropyl phosphate + CO2 + NADH. It functions in the pathway cofactor biosynthesis; pyridoxine 5'-phosphate biosynthesis; pyridoxine 5'-phosphate from D-erythrose 4-phosphate: step 4/5. Catalyzes the NAD(P)-dependent oxidation of 4-(phosphooxy)-L-threonine (HTP) into 2-amino-3-oxo-4-(phosphooxy)butyric acid which spontaneously decarboxylates to form 3-amino-2-oxopropyl phosphate (AHAP). This chain is 4-hydroxythreonine-4-phosphate dehydrogenase, found in Escherichia coli O81 (strain ED1a).